The sequence spans 1826 residues: 1,3-beta-glucan synthase component bgs3 (1826 aa).

Polar residues predominate over residues 34 to 43; the sequence is QSNDQYNNIQ. A disordered region spans residues 34-90; sequence QSNDQYNNIQHPAPSFANPFIHEQDDSYSDILEEEPDEDAYDSPERPSSTEEFISQD. The span at 59–75 shows a compositional bias: acidic residues; sequence DSYSDILEEEPDEDAYD. 7 helical membrane passes run 427-447, 465-485, 504-524, 543-563, 597-617, 637-657, and 660-680; these read IWILHISVFWYFTVYNSPTIY, WCAPALAGAVASFISFLALIL, LIFVSILIALNIVPAAFIFGF, FFFSIGCVAYQSFIPLPFLLG, AALWITVFIAKFVESYYFLTL, FMIGASLCSHQPKFLLSLVYL, and LVLFFLDTYLWYMLISTMFSI. Serine 885 carries the post-translational modification Phosphoserine. The next 11 membrane-spanning stretches (helical) occupy residues 1272–1292, 1329–1349, 1375–1397, 1417–1437, 1438–1458, 1531–1551, 1571–1591, 1607–1627, 1642–1662, 1701–1721, and 1770–1790; these read VFIMISMQLLMLVFVNLGAMY, IISIFIVFFISFLPLVVHDLL, VTQNYANSIFTNLTYGGARYIAT, GSSIYLGSRLIMMLLFGTMTV, WTTHYVYFWVTMFALVICPFI, IFTEVFLPACFAFFTICAYTF, IWIMAALPIAISTAALLILLM, YGAVLAALAHAVSVFGLVFTF, VLGCIVIFAIHRLVFKLVVVF, CKVVEMNLFAMDFILSHCILF, and SLLFFALLCTFVAMIVVPLVL.

The protein belongs to the glycosyltransferase 48 family. Component of the 1,3-beta-glucan synthase (GS) complex, composed of at least the alternate catalytic subunits bgs1, bgs2, bgs3, and bgs4, and a regulatory subunit chr4.

It is found in the membrane. The enzyme catalyses [(1-&gt;3)-beta-D-glucosyl](n) + UDP-alpha-D-glucose = [(1-&gt;3)-beta-D-glucosyl](n+1) + UDP + H(+). In terms of biological role, alternate catalytic subunit of the 1,3-beta-glucan synthase (GS) complex. Synthesizes 1,3-beta-glucan, a major structural component of the yeast cell wall. Required for cell wall biosynthesis and cell elongation. The polypeptide is 1,3-beta-glucan synthase component bgs3 (Schizosaccharomyces pombe (strain 972 / ATCC 24843) (Fission yeast)).